Here is a 417-residue protein sequence, read N- to C-terminus: S-inosyl-L-homocysteine hydrolase (417 aa).

2 residues coordinate substrate: D124 and E149. 150–152 (TTT) is an NAD(+) binding site. K179 and D183 together coordinate substrate. NAD(+) is bound by residues N184, 213-218 (GYGWCG), E236, N271, 292-294 (SGH), and N339.

The protein belongs to the adenosylhomocysteinase family. NAD(+) is required as a cofactor.

Its subcellular location is the cytoplasm. It carries out the reaction S-inosyl-L-homocysteine + H2O = L-homocysteine + inosine. Its pathway is amino-acid biosynthesis; S-adenosyl-L-methionine biosynthesis. Catalyzes the hydrolysis of S-inosyl-L-homocysteine (SIH) to L-homocysteine (Hcy) and inosine. Likely functions in a S-adenosyl-L-methionine (SAM) recycling pathway from S-adenosyl-L-homocysteine (SAH) produced from SAM-dependent methylation reactions. Can also catalyze the reverse reaction in vitro, i.e. the synthesis of SIH from Hcy and inosine. This is S-inosyl-L-homocysteine hydrolase from Methanothermobacter thermautotrophicus (strain ATCC 29096 / DSM 1053 / JCM 10044 / NBRC 100330 / Delta H) (Methanobacterium thermoautotrophicum).